The primary structure comprises 545 residues: Sphingomyelin phosphodiesterase 5 (545 aa).

The N-terminal 35 residues, 1–35, are a transit peptide targeting the mitochondrion; it reads MSLRESPFPNGFLEGLHAVGWGLIFPCFWFLDRLI. At 36–64 the chain is on the mitochondrial matrix side; the sequence is AVCISTTLERMWRLEQECYLHPLKVVFGS. The chain crosses the membrane as a helical; Signal-anchor for type II membrane protein span at residues 65–85; that stretch reads ILFFILFVISTPFALLGFILW. The Mitochondrial intermembrane segment spans residues 86-545; it reads APLQAIRRPF…LSVSLDSEQN (460 aa). Mg(2+) is bound at residue glutamate 258. Residue histidine 529 is the Proton acceptor of the active site.

Belongs to the neutral sphingomyelinase family. The cofactor is Mg(2+). Mn(2+) serves as cofactor.

The protein resides in the mitochondrion inner membrane. It localises to the endoplasmic reticulum membrane. The enzyme catalyses a sphingomyelin + H2O = phosphocholine + an N-acylsphing-4-enine + H(+). The catalysed reaction is N-(hexadecanoyl)-sphing-4-enine-1-phosphocholine + H2O = N-hexadecanoylsphing-4-enine + phosphocholine + H(+). It participates in lipid metabolism; sphingolipid metabolism. Its activity is regulated as follows. Activated by the phospholipids cardiolipin, phosphatidylserine, and phosphatidylethanolamine. Strongest activation with cardiolipin. In terms of biological role, catalyzes the hydrolysis of membrane sphingomyelin to form phosphorylcholine and ceramide. This is Sphingomyelin phosphodiesterase 5 from Danio rerio (Zebrafish).